Reading from the N-terminus, the 220-residue chain is MKSEHIPKATIKRLAMYVQVLETLKREGSQVVSSELLARTCSVNPSQIRKDLAYFGEFGVRGVGYHVQDLIYSIKHSLGVDRVWKCALVGIGNLGKALLRHQDFKFRGFDIVGAFDCDPFKIGEEISGLEVVCTRRLKDAVKELGIEIGLITTPVNRAQRATNFLIEAGVKGIINYSPAMLTVPPDVYVEYVDFFHHFYSVAFSITLDRHQDRMGGDEDD.

The segment at residues 16–55 (MYVQVLETLKREGSQVVSSELLARTCSVNPSQIRKDLAYF) is a DNA-binding region (H-T-H motif). 90-95 (GIGNLG) is an NAD(+) binding site.

The protein belongs to the transcriptional regulatory Rex family. As to quaternary structure, homodimer.

It localises to the cytoplasm. In terms of biological role, modulates transcription in response to changes in cellular NADH/NAD(+) redox state. The protein is Redox-sensing transcriptional repressor Rex of Solidesulfovibrio magneticus (strain ATCC 700980 / DSM 13731 / RS-1) (Desulfovibrio magneticus).